The primary structure comprises 382 residues: Lipid-A-disaccharide synthase (382 aa).

This sequence belongs to the LpxB family.

It catalyses the reaction 2-N,3-O-bis[(3R)-3-hydroxytetradecanoyl]-alpha-D-glucosaminyl 1-phosphate + UDP-2-N,3-O-bis[(3R)-3-hydroxytetradecanoyl]-alpha-D-glucosamine = lipid A disaccharide (E. coli) + UDP + H(+). The catalysed reaction is a lipid X + a UDP-2-N,3-O-bis[(3R)-3-hydroxyacyl]-alpha-D-glucosamine = a lipid A disaccharide + UDP + H(+). The protein operates within glycolipid biosynthesis; lipid IV(A) biosynthesis; lipid IV(A) from (3R)-3-hydroxytetradecanoyl-[acyl-carrier-protein] and UDP-N-acetyl-alpha-D-glucosamine: step 5/6. Its function is as follows. Condensation of UDP-2,3-diacylglucosamine and 2,3-diacylglucosamine-1-phosphate to form lipid A disaccharide, a precursor of lipid A, a phosphorylated glycolipid that anchors the lipopolysaccharide to the outer membrane of the cell. The polypeptide is Lipid-A-disaccharide synthase (Escherichia coli (strain SMS-3-5 / SECEC)).